The sequence spans 128 residues: Large ribosomal subunit protein uL18 (128 aa).

Residues 1 to 36 (MAKRSSLTRRGVSPRAAARARRHMRVRKKVRGTPER) are disordered. Residues 18–31 (ARARRHMRVRKKVR) show a composition bias toward basic residues.

This sequence belongs to the universal ribosomal protein uL18 family. In terms of assembly, part of the 50S ribosomal subunit; part of the 5S rRNA/L5/L18/L25 subcomplex. Contacts the 5S and 23S rRNAs.

In terms of biological role, this is one of the proteins that bind and probably mediate the attachment of the 5S RNA into the large ribosomal subunit, where it forms part of the central protuberance. This is Large ribosomal subunit protein uL18 from Thermobifida fusca (strain YX).